The primary structure comprises 566 residues: Mucolipin-2 (566 aa).

The Cytoplasmic portion of the chain corresponds to 1–65; that stretch reads MPGDEETLDL…YRARRQIPWK (65 aa). A helical transmembrane segment spans residues 66–86; it reads LGLQILKIVMVTTQLVRFGLS. Residues 87–288 lie on the Extracellular side of the membrane; it reads NQLVVAFKED…ISGSTQRSTH (202 aa). The tract at residues 107 to 123 is extracellular/lumenal pore loop; the sequence is KGFSGVDEDDYSCSIYT. 2 disulfides stabilise this stretch: C164–C190 and C243–C274. Residues 289–309 form a helical membrane-spanning segment; the sequence is YLLVFDVFVIMICLASLILCT. Over 310 to 346 the chain is Cytoplasmic; the sequence is RSIVLALRLRKRFLNFFLEKYKQRVCGADQWEFVNGW. A helical transmembrane segment spans residues 347–367; sequence YVLVTISDLMTIIGSILKMEI. Over 368 to 376 the chain is Extracellular; the sequence is KAKKLTNYD. A helical membrane pass occupies residues 377–397; sequence VCSILLGTSTLFVWVGVIRYL. Residues 398 to 419 lie on the Cytoplasmic side of the membrane; that stretch reads GYFQTYNVLILTMQASLPKVLR. The chain crosses the membrane as a helical span at residues 420-440; that stretch reads FCACAGMIYLGYTFCGWIVLG. Residues 441 to 448 are Extracellular-facing; that stretch reads PYHEKFEN. Positions 449–469 form an intramembrane region, pore-forming; the sequence is LNIVAECLFSLVNGDDMFATF. Positions 461–464 match the Selectivity filter motif; that stretch reads NGDD. Over 470 to 480 the chain is Extracellular; sequence AQIQQKSILVW. A helical transmembrane segment spans residues 481-502; it reads LFSRLYLYSFISLFIYMVLSLF. Over 503 to 566 the chain is Cytoplasmic; it reads IALITDSYHT…RSNDHLILID (64 aa).

Belongs to the transient receptor (TC 1.A.4) family. Polycystin subfamily. MCOLN2 sub-subfamily. Forms homooligomeric complexes; probably tetrameric. Can heterooligomerize with MCOLN1; heteromeric assemblies have different channel properties as compared to the respective homooligomers and may be tissue-specific. Interacts with TMEM176A. Expressed in activated macrophages and microglia (at protein level). As to expression, isoform 1 is widely expressed at very low levels. In terms of tissue distribution, isoform 2 is expressed at high levels in lymphoid tissues (thymus and spleen) and kidney, and at moderate levels in heart, lung, liver and stomach.

The protein resides in the cell membrane. It is found in the lysosome membrane. The protein localises to the recycling endosome membrane. It carries out the reaction Ca(2+)(in) = Ca(2+)(out). The catalysed reaction is Fe(2+)(in) = Fe(2+)(out). With respect to regulation, fe(2+) channel activity is potentiated by low pH. In terms of biological role, nonselective cation channel probably playing a role in the regulation of membrane trafficking events. Acts as a Ca(2+)-permeable cation channel with inwardly rectifying activity. May activate ARF6 and be involved in the trafficking of GPI-anchored cargo proteins to the cell surface via the ARF6-regulated recycling pathway. May play a role in immune processes. In adaptive immunity, TRPML2 and TRPML1 may play redundant roles in the function of the specialized lysosomes of B cells. In the innate immune response, may play a role in the regulation of chemokine secretion and macrophage migration. Through a possible and probably tissue-specific heteromerization with MCOLN1 may be at least in part involved in many lysosome-dependent cellular events. Also functions as a Fe(2+) permeable channel. The protein is Mucolipin-2 (Mcoln2) of Mus musculus (Mouse).